Reading from the N-terminus, the 333-residue chain is MTPSTPADDAWIRSYQRLLPESQSLLASRRSVIPVAISRVNQFDAARLDVEMSAMLKEQLVKVFTLMKPGMLFQYEPELDAFLEFLIWRFSIWVDKPTPGNALMNLRYRDERGVVAQHLGKVRTGLEGPGLTSPQKIWYCVASVGGQYLFSRLQSFSAFRRWGDSEQRPLARRLWTLVQRIEGIYKAASFLNLLSFLYTGRYRNLIEKALKARLVYRSPHMNRSVSFEYMNRQLVWNEFSEMLLLLLPLLNSSAVKNILSPFAKDKSSSTKEDTVTCPICQVDPAIPFIALPCQHRYCYYCIRTRCASAASFRCLRCNEPVVAIQREGVSSGK.

The Peroxisomal matrix portion of the chain corresponds to 1-38 (MTPSTPADDAWIRSYQRLLPESQSLLASRRSVIPVAIS). A helical membrane pass occupies residues 39 to 65 (RVNQFDAARLDVEMSAMLKEQLVKVFT). Topologically, residues 66-71 (LMKPGM) are cytoplasmic. The chain crosses the membrane as a helical span at residues 72-97 (LFQYEPELDAFLEFLIWRFSIWVDKP). At 98-131 (TPGNALMNLRYRDERGVVAQHLGKVRTGLEGPGL) the chain is on the peroxisomal matrix side. Residues 132–158 (TSPQKIWYCVASVGGQYLFSRLQSFSA) form a helical membrane-spanning segment. The Cytoplasmic portion of the chain corresponds to 159 to 168 (FRRWGDSEQR). The chain crosses the membrane as a helical span at residues 169–199 (PLARRLWTLVQRIEGIYKAASFLNLLSFLYT). Residues 200 to 226 (GRYRNLIEKALKARLVYRSPHMNRSVS) lie on the Peroxisomal matrix side of the membrane. The chain crosses the membrane as a helical span at residues 227 to 250 (FEYMNRQLVWNEFSEMLLLLLPLL). The Cytoplasmic portion of the chain corresponds to 251 to 333 (NSSAVKNILS…IQREGVSSGK (83 aa)). Zn(2+) is bound by residues Cys277, Cys280, Cys293, His295, Cys298, Cys301, Cys314, and Cys317. The RING-type zinc finger occupies 277–318 (CPICQVDPAIPFIALPCQHRYCYYCIRTRCASAASFRCLRCN).

Belongs to the pex2/pex10/pex12 family. Component of the PEX2-PEX10-PEX12 retrotranslocation channel. Interacts with DSK2a and DSK2b. Expressed in roots, stems, leaves, flowers, pollen, ovules, seeds and siliques.

The protein localises to the peroxisome membrane. The catalysed reaction is [E2 ubiquitin-conjugating enzyme]-S-ubiquitinyl-L-cysteine + [acceptor protein]-L-cysteine = [E2 ubiquitin-conjugating enzyme]-L-cysteine + [acceptor protein]-S-ubiquitinyl-L-cysteine.. The protein operates within protein modification; protein ubiquitination. Its function is as follows. E3 ubiquitin-protein ligase component of a retrotranslocation channel required for peroxisome organization by mediating export of the PEX5 receptor from peroxisomes to the cytosol, thereby promoting PEX5 recycling. The retrotranslocation channel is composed of PEX2, PEX10 and PEX12; each subunit contributing transmembrane segments that coassemble into an open channel that specifically allows the passage of PEX5 through the peroxisomal membrane. PEX2 also regulates peroxisome organization by acting as a E3 ubiquitin-protein ligase. PEX2 ubiquitinates PEX5 during its passage through the retrotranslocation channel: catalyzes monoubiquitination of PEX5 at 'Cys-6', a modification that acts as a signal for PEX5 extraction into the cytosol. This Arabidopsis thaliana (Mouse-ear cress) protein is Peroxisome biogenesis protein 2 (PEX2).